Reading from the N-terminus, the 597-residue chain is K(+) efflux antiporter 6 (597 aa).

A signal peptide spans 1-35; that stretch reads MVEGRRRRRFSLSSQQLALLLLLLSFFLCFSVASP. 12 helical membrane passes run 177–197, 201–221, 224–244, 257–277, 287–307, 321–341, 351–371, 396–416, 440–460, 461–481, 499–519, and 543–563; these read LISDLVVVIVSATCGGIAFAC, PVITGYLLAGSIIGPGGLNFI, MVQVETVAQFGVVFLLFALGL, VAVLGGLLQILLFMFLCGITV, GVFVGAFLSMSSTAVVLKFLM, IGILILQDCAVGLLFALLPVL, MLSIGKVVVLLLSFLAVLSIL, LAAVAFCLLVAWCSDKLGLSL, IEPIRNLFAALFLASIGMLVN, VHFLWTHVDILLASVILVIII, TALLVGISLAQIGEFAFVLLS, and LVTTPLVFKMIPAVVHLGILL.

This sequence belongs to the monovalent cation:proton antiporter 2 (CPA2) transporter (TC 2.A.37) family. KEA (TC 2.A.37.1) subfamily. Expressed in roots, stems, leaves, flowers and silique.

It localises to the golgi apparatus membrane. The protein localises to the golgi apparatus. The protein resides in the trans-Golgi network membrane. Its subcellular location is the prevacuolar compartment membrane. It is found in the endomembrane system. The enzyme catalyses K(+)(in) + H(+)(out) = K(+)(out) + H(+)(in). Its function is as follows. Electroneutral K(+)/H(+) efflux antiporter involved in K(+) homeostasis and osmotic adjustment. Together with KEA4 and KEA5, promotes growth and development, and facilitates endosomal pH and ions homeostasis, as well as salt tolerance (e.g. K(+), NaCl and LiCl), probably by supporting cell wall biosynthesis during rapid etiolated seedling growth. This chain is K(+) efflux antiporter 6, found in Arabidopsis thaliana (Mouse-ear cress).